Consider the following 172-residue polypeptide: Large ribosomal subunit protein uL10 (172 aa).

Belongs to the universal ribosomal protein uL10 family. In terms of assembly, part of the ribosomal stalk of the 50S ribosomal subunit. The N-terminus interacts with L11 and the large rRNA to form the base of the stalk. The C-terminus forms an elongated spine to which L12 dimers bind in a sequential fashion forming a multimeric L10(L12)X complex.

Its function is as follows. Forms part of the ribosomal stalk, playing a central role in the interaction of the ribosome with GTP-bound translation factors. In Francisella philomiragia subsp. philomiragia (strain ATCC 25017 / CCUG 19701 / FSC 153 / O#319-036), this protein is Large ribosomal subunit protein uL10.